We begin with the raw amino-acid sequence, 706 residues long: K(+)-insensitive pyrophosphate-energized proton pump (706 aa).

A run of 5 helical transmembrane segments spans residues 1 to 21 (MTALWLIVLCGVLSVVYAIWA), 62 to 82 (IVIFVLLVYFLGFYVAIGFAI), 83 to 103 (GAILSGAAGFIGMNVSVRANV), 128 to 148 (GMLVAGLALLGVTLYFGFLVY), and 164 to 184 (VALGFGASLISIFARLGGGIF). Position 186 (lysine 186) interacts with substrate. Positions 189, 193, 216, and 219 each coordinate Mg(2+). 6 helical membrane-spanning segments follow: residues 231 to 251 (LFETYAVTAVATMVLAAIFFA), 261 to 281 (TLPLAIGGICIITSIIGTFFV), 298 to 318 (IATGVLSLIGIAVVIYTLIGF), 328 to 348 (GMSLFECGVVGLIVTALIIWI), 376 to 398 (IQGLAISMEATALPAIVIIAGIL), and 412 to 432 (ATATMLALAGMIVALDAFGPV). Residue aspartate 434 participates in Mg(2+) binding. Transmembrane regions (helical) follow at residues 465 to 485 (AVTKGYAIGSAGLGALVLFAA), 516 to 536 (YVVVGLLFGGLLPYLFGAMGM), 585 to 605 (IIPSLLPVLSPIVVYFLIYAI), and 616 to 636 (AFSAVGAMLLGVIVTGLFVAI). Residues aspartate 646, aspartate 672, and aspartate 676 each contribute to the Ca(2+) site. Lysine 679 is a binding site for substrate. A helical membrane pass occupies residues 685 to 705 (AVNPMIKITNIVALLLLAILA).

The protein belongs to the H(+)-translocating pyrophosphatase (TC 3.A.10) family. K(+)-insensitive subfamily. Homodimer. Requires Mg(2+) as cofactor.

Its subcellular location is the cell inner membrane. It catalyses the reaction diphosphate + H2O + H(+)(in) = 2 phosphate + 2 H(+)(out). Proton pump that utilizes the energy of pyrophosphate hydrolysis as the driving force for proton movement across the membrane. Generates a proton motive force. The chain is K(+)-insensitive pyrophosphate-energized proton pump from Bradyrhizobium diazoefficiens (strain JCM 10833 / BCRC 13528 / IAM 13628 / NBRC 14792 / USDA 110).